A 499-amino-acid polypeptide reads, in one-letter code: Inosine-5'-monophosphate dehydrogenase (499 aa).

CBS domains follow at residues 106–165 (IDRE…SDAV) and 169–225 (MTDE…GSAA). Residues D260 and 308-310 (GIG) contribute to the NAD(+) site. Positions 310 and 312 each coordinate K(+). S313 serves as a coordination point for IMP. C315 provides a ligand contact to K(+). Catalysis depends on C315, which acts as the Thioimidate intermediate. Residues 348–350 (DGG), 371–372 (GS), and 395–399 (YRGMG) each bind IMP. R411 serves as the catalytic Proton acceptor. E425 lines the IMP pocket. K(+) is bound by residues E479, G480, and H481. Residues 480–499 (GHPHDVMITDEAPNYSPQGE) form a disordered region.

The protein belongs to the IMPDH/GMPR family. Homotetramer. The cofactor is K(+).

The enzyme catalyses IMP + NAD(+) + H2O = XMP + NADH + H(+). It participates in purine metabolism; XMP biosynthesis via de novo pathway; XMP from IMP: step 1/1. Its activity is regulated as follows. Mycophenolic acid (MPA) is a non-competitive inhibitor that prevents formation of the closed enzyme conformation by binding to the same site as the amobile flap. In contrast, mizoribine monophosphate (MZP) is a competitive inhibitor that induces the closed conformation. MPA is a potent inhibitor of mammalian IMPDHs but a poor inhibitor of the bacterial enzymes. MZP is a more potent inhibitor of bacterial IMPDH. In terms of biological role, catalyzes the conversion of inosine 5'-phosphate (IMP) to xanthosine 5'-phosphate (XMP), the first committed and rate-limiting step in the de novo synthesis of guanine nucleotides, and therefore plays an important role in the regulation of cell growth. The chain is Inosine-5'-monophosphate dehydrogenase from Halobacterium salinarum (strain ATCC 700922 / JCM 11081 / NRC-1) (Halobacterium halobium).